Reading from the N-terminus, the 442-residue chain is Elongation factor 1-alpha 1 (442 aa).

Residues 5–227 form the tr-type G domain; that stretch reads KEHLNLVVIG…AALDSFKIPK (223 aa). The tract at residues 14-21 is G1; that stretch reads GHVDSGKS. 14–21 contributes to the GTP binding site; it reads GHVDSGKS. The segment at 70–74 is G2; sequence GITID. A G3 region spans residues 91 to 94; that stretch reads DAPG. GTP contacts are provided by residues 91–95 and 153–156; these read DAPGH and NKMD. A G4 region spans residues 153-156; sequence NKMD. Residues 194-196 form a G5 region; it reads SGF.

It belongs to the TRAFAC class translation factor GTPase superfamily. Classic translation factor GTPase family. EF-Tu/EF-1A subfamily.

The protein resides in the cytoplasm. In terms of biological role, this protein promotes the GTP-dependent binding of aminoacyl-tRNA to the A-site of ribosomes during protein biosynthesis. The chain is Elongation factor 1-alpha 1 (EFA1) from Euplotes crassus.